Here is a 260-residue protein sequence, read N- to C-terminus: Hydroxyethylthiazole kinase (260 aa).

Arg126 and Ser172 together coordinate ATP. Substrate is bound at residue Gly199.

It belongs to the Thz kinase family. Mg(2+) serves as cofactor.

The catalysed reaction is 5-(2-hydroxyethyl)-4-methylthiazole + ATP = 4-methyl-5-(2-phosphooxyethyl)-thiazole + ADP + H(+). The protein operates within cofactor biosynthesis; thiamine diphosphate biosynthesis; 4-methyl-5-(2-phosphoethyl)-thiazole from 5-(2-hydroxyethyl)-4-methylthiazole: step 1/1. Catalyzes the phosphorylation of the hydroxyl group of 4-methyl-5-beta-hydroxyethylthiazole (THZ). The chain is Hydroxyethylthiazole kinase from Burkholderia thailandensis (strain ATCC 700388 / DSM 13276 / CCUG 48851 / CIP 106301 / E264).